Here is a 38-residue protein sequence, read N- to C-terminus: Large ribosomal subunit protein bL36 (38 aa).

The protein belongs to the bacterial ribosomal protein bL36 family.

This Polynucleobacter necessarius subsp. necessarius (strain STIR1) protein is Large ribosomal subunit protein bL36.